We begin with the raw amino-acid sequence, 427 residues long: UPF0597 protein CPF_0803 (427 aa).

Belongs to the UPF0597 family.

The sequence is that of UPF0597 protein CPF_0803 from Clostridium perfringens (strain ATCC 13124 / DSM 756 / JCM 1290 / NCIMB 6125 / NCTC 8237 / Type A).